A 150-amino-acid chain; its full sequence is 3-dehydroquinate dehydratase (150 aa).

Catalysis depends on Tyr-26, which acts as the Proton acceptor. Positions 77, 83, and 90 each coordinate substrate. The active-site Proton donor is the His-103. Residues 104 to 105 and Arg-114 each bind substrate; that span reads LS.

The protein belongs to the type-II 3-dehydroquinase family. Homododecamer.

It catalyses the reaction 3-dehydroquinate = 3-dehydroshikimate + H2O. It functions in the pathway metabolic intermediate biosynthesis; chorismate biosynthesis; chorismate from D-erythrose 4-phosphate and phosphoenolpyruvate: step 3/7. In terms of biological role, catalyzes a trans-dehydration via an enolate intermediate. In Yersinia enterocolitica serotype O:8 / biotype 1B (strain NCTC 13174 / 8081), this protein is 3-dehydroquinate dehydratase.